The chain runs to 364 residues: Dihydroorotate dehydrogenase (quinone) (364 aa).

FMN-binding positions include 61-65 (AGFDK) and T85. K65 contacts substrate. 110–114 (NRMGF) contributes to the substrate binding site. FMN-binding residues include N139 and N170. Residue N170 participates in substrate binding. S173 functions as the Nucleophile in the catalytic mechanism. Residue N175 coordinates substrate. FMN is bound by residues K214 and A242. Residue 243-244 (NT) participates in substrate binding. FMN-binding positions include G266, G295, and 316–317 (YS).

This sequence belongs to the dihydroorotate dehydrogenase family. Type 2 subfamily. As to quaternary structure, monomer. FMN is required as a cofactor.

It localises to the cell membrane. The enzyme catalyses (S)-dihydroorotate + a quinone = orotate + a quinol. Its pathway is pyrimidine metabolism; UMP biosynthesis via de novo pathway; orotate from (S)-dihydroorotate (quinone route): step 1/1. Its function is as follows. Catalyzes the conversion of dihydroorotate to orotate with quinone as electron acceptor. This is Dihydroorotate dehydrogenase (quinone) from Rhodopseudomonas palustris (strain BisB5).